Reading from the N-terminus, the 161-residue chain is DNA-directed RNA polymerase 18 kDa subunit (161 aa).

Belongs to the poxviridae DNA-directed RNA polymerase 18 kDa subunit family. The DNA-dependent RNA polymerase used for intermediate and late genes expression consists of eight subunits Rpo30/OPG66, Rpo7/OPG90, Rpo22/OPG103, Rpo147/OPG105, Rpo18/OPG119, Rpo19/OPG131, Rpo132/OPG151 and Rpo35/OPG156. The same holoenzyme, with the addition of the transcription-specificity factor OPG109, is used for early gene expression.

Its subcellular location is the virion. It carries out the reaction RNA(n) + a ribonucleoside 5'-triphosphate = RNA(n+1) + diphosphate. Part of the DNA-dependent RNA polymerase which catalyzes the transcription of viral DNA into RNA using the four ribonucleoside triphosphates as substrates. Responsible for the transcription of early, intermediate and late genes. DNA-dependent RNA polymerase associates with the early transcription factor (ETF), itself composed of OPG118 and OPG133, thereby allowing the early genes transcription. Late transcription, and probably also intermediate transcription, require newly synthesized RNA polymerase. This Homo sapiens (Human) protein is DNA-directed RNA polymerase 18 kDa subunit (OPG119).